Consider the following 471-residue polypeptide: Putative multidrug resistance protein MdtD (471 aa).

13 helical membrane-spanning segments follow: residues 12–32, 49–69, 77–97, 102–124, 138–158, 165–185, 195–215, 220–240, 263–283, 286–306, 329–351, 393–413, and 431–451; these read LWIV…VNTA, MIIV…GWLA, IFFT…QAST, VMAR…LTVM, FVTL…GVLV, WIFL…LCLM, FDLS…LALD, LGIS…ALLL, FSLG…LPFM, VFLQ…MIPM, VLVA…ALAG, LLSM…GLLL, and VFLY…LIFS.

Belongs to the major facilitator superfamily. TCR/Tet family.

The protein localises to the cell inner membrane. The polypeptide is Putative multidrug resistance protein MdtD (Klebsiella pneumoniae subsp. pneumoniae (strain ATCC 700721 / MGH 78578)).